A 298-amino-acid chain; its full sequence is uncharacterized protein (298 aa).

This is an uncharacterized protein from Ictalurid herpesvirus 1 (strain Auburn) (IcHV-1).